Reading from the N-terminus, the 73-residue chain is Guanine nucleotide-binding protein G(I)/G(S)/G(O) subunit gamma-11 (73 aa).

A disordered region spans residues 51-73 (DPLVKGIPEDKNPFKEKGSCVIS). Cys70 carries the cysteine methyl ester modification. Cys70 carries S-farnesyl cysteine lipidation. The propeptide at 71 to 73 (VIS) is removed in mature form.

The protein belongs to the G protein gamma family. As to quaternary structure, g proteins are composed of 3 units, alpha, beta and gamma. Interacts with beta-1 and beta-3, but not with beta-2. In terms of tissue distribution, abundantly expressed in all tissues tested except for brain.

It localises to the cell membrane. In terms of biological role, guanine nucleotide-binding proteins (G proteins) are involved as a modulator or transducer in various transmembrane signaling systems. The beta and gamma chains are required for the GTPase activity, for replacement of GDP by GTP, and for G protein-effector interaction. In Homo sapiens (Human), this protein is Guanine nucleotide-binding protein G(I)/G(S)/G(O) subunit gamma-11 (GNG11).